Reading from the N-terminus, the 219-residue chain is Counting factor-associated protein C (219 aa).

Positions 1 to 16 (MKVLILLVSLISVCFS) are cleaved as a signal peptide. N-linked (GlcNAc...) asparagine glycosylation is found at Asn-74 and Asn-123.

The protein localises to the secreted. In Dictyostelium discoideum (Social amoeba), this protein is Counting factor-associated protein C (cfaC).